Consider the following 158-residue polypeptide: RNA pyrophosphohydrolase (158 aa).

A Nudix hydrolase domain is found at 9-151 (PLRNGVGIVV…KLHVYKDVKE (143 aa)). Residues 43-64 (GGVDKGEDYLTAAYRELEEETS) carry the Nudix box motif.

Belongs to the Nudix hydrolase family. RppH subfamily. A divalent metal cation serves as cofactor.

In terms of biological role, accelerates the degradation of transcripts by removing pyrophosphate from the 5'-end of triphosphorylated RNA, leading to a more labile monophosphorylated state that can stimulate subsequent ribonuclease cleavage. The chain is RNA pyrophosphohydrolase from Pelagibacter ubique (strain HTCC1062).